The chain runs to 144 residues: Maximins 3/H5 (144 aa).

The signal sequence occupies residues 1–18; sequence MNFKYIFAVSFLIASAYA. 2 consecutive propeptides follow at residues 19–43 and 74–123; these read RSVQ…REIR and TAEE…KEKR. Residue L143 is modified to Leucine amide.

This sequence belongs to the bombinin family. In terms of tissue distribution, expressed by the skin glands.

Its subcellular location is the secreted. Maximin-3 shows antibacterial activity against both Gram-positive and Gram-negative bacteria. It also shows antimicrobial activity against the fungus C.albicans, but not against A.flavus nor P.uticale. It has little hemolytic activity. It possess a significant cytotoxicity against tumor cell lines. It possess a significant anti-HIV activity. It shows high spermicidal activity. Functionally, maximin-H5 shows antibacterial activity only against the Gram-positive bacteria S.aureus. The other bacterial and fungal strains tested were resistant to it. The presence of metal ions, like Zn(2+) and Mg(2+), did not increase its antimicrobial potency. Does not show hemolytic activity (in a concentration up to 80 uM). The polypeptide is Maximins 3/H5 (Bombina maxima (Giant fire-bellied toad)).